The primary structure comprises 273 residues: Urease accessory protein UreD (273 aa).

The protein belongs to the UreD family. In terms of assembly, ureD, UreF and UreG form a complex that acts as a GTP-hydrolysis-dependent molecular chaperone, activating the urease apoprotein by helping to assemble the nickel containing metallocenter of UreC. The UreE protein probably delivers the nickel.

The protein resides in the cytoplasm. Its function is as follows. Required for maturation of urease via the functional incorporation of the urease nickel metallocenter. This is Urease accessory protein UreD from Mycolicibacterium gilvum (strain PYR-GCK) (Mycobacterium gilvum (strain PYR-GCK)).